Reading from the N-terminus, the 594-residue chain is Adenine deaminase 1 (594 aa).

Belongs to the metallo-dependent hydrolases superfamily. Adenine deaminase family. Mn(2+) is required as a cofactor.

The enzyme catalyses adenine + H2O + H(+) = hypoxanthine + NH4(+). In Desulfotalea psychrophila (strain LSv54 / DSM 12343), this protein is Adenine deaminase 1.